A 427-amino-acid polypeptide reads, in one-letter code: 3-phosphoshikimate 1-carboxyvinyltransferase (427 aa).

Positions 20, 21, and 25 each coordinate 3-phosphoshikimate. Residue Lys-20 coordinates phosphoenolpyruvate. Residues Gly-92 and Arg-120 each contribute to the phosphoenolpyruvate site. 4 residues coordinate 3-phosphoshikimate: Ser-166, Gln-168, Asp-312, and Lys-339. Gln-168 is a binding site for phosphoenolpyruvate. Asp-312 (proton acceptor) is an active-site residue. Phosphoenolpyruvate contacts are provided by Arg-343 and Arg-385.

This sequence belongs to the EPSP synthase family. As to quaternary structure, monomer.

It is found in the cytoplasm. It catalyses the reaction 3-phosphoshikimate + phosphoenolpyruvate = 5-O-(1-carboxyvinyl)-3-phosphoshikimate + phosphate. It participates in metabolic intermediate biosynthesis; chorismate biosynthesis; chorismate from D-erythrose 4-phosphate and phosphoenolpyruvate: step 6/7. Catalyzes the transfer of the enolpyruvyl moiety of phosphoenolpyruvate (PEP) to the 5-hydroxyl of shikimate-3-phosphate (S3P) to produce enolpyruvyl shikimate-3-phosphate and inorganic phosphate. The protein is 3-phosphoshikimate 1-carboxyvinyltransferase of Streptococcus equi subsp. equi (strain 4047).